The chain runs to 226 residues: Isoprenyl transferase (226 aa).

Residue aspartate 12 is part of the active site. Mg(2+) is bound at residue aspartate 12. Residues 13–16 (GNAR), tryptophan 17, lysine 25, histidine 29, and 57–59 (SFE) each bind substrate. The active-site Proton acceptor is the asparagine 60. Substrate is bound by residues tryptophan 61, arginine 63, arginine 174, and 180-182 (RIS). Glutamate 193 is a binding site for Mg(2+).

It belongs to the UPP synthase family. Homodimer. It depends on Mg(2+) as a cofactor.

Functionally, catalyzes the condensation of isopentenyl diphosphate (IPP) with allylic pyrophosphates generating different type of terpenoids. The protein is Isoprenyl transferase of Rickettsia prowazekii (strain Madrid E).